The following is a 403-amino-acid chain: Queuine tRNA-ribosyltransferase catalytic subunit 1 (403 aa).

At A2 the chain carries N-acetylalanine. D105 serves as the catalytic Proton acceptor. 105–109 (DSGGF) contacts queuine. Position 139 is a phosphoserine (S139). Queuine is bound by residues D159, Q202, and G229. The interval 260 to 266 (GVGYATD) is RNA binding. The active-site Nucleophile is the D279. Positions 284–288 (TRTAR) are RNA binding; important for wobble base 34 recognition. C317, C319, C322, and H348 together coordinate Zn(2+).

Belongs to the queuine tRNA-ribosyltransferase family. As to quaternary structure, heterodimer of a catalytic subunit QTRT1 and an accessory subunit QTRT2. Zn(2+) is required as a cofactor.

It is found in the cytoplasm. The protein resides in the mitochondrion outer membrane. It catalyses the reaction guanosine(34) in tRNA + queuine = queuosine(34) in tRNA + guanine. Catalytic subunit of the queuine tRNA-ribosyltransferase (TGT) that catalyzes the base-exchange of a guanine (G) residue with queuine (Q) at position 34 (anticodon wobble position) in tRNAs with GU(N) anticodons (tRNA-Asp, -Asn, -His and -Tyr), resulting in the hypermodified nucleoside queuosine (7-(((4,5-cis-dihydroxy-2-cyclopenten-1-yl)amino)methyl)-7-deazaguanosine). Catalysis occurs through a double-displacement mechanism. The nucleophile active site attacks the C1' of nucleotide 34 to detach the guanine base from the RNA, forming a covalent enzyme-RNA intermediate. The proton acceptor active site deprotonates the incoming queuine, allowing a nucleophilic attack on the C1' of the ribose to form the product. In Rattus norvegicus (Rat), this protein is Queuine tRNA-ribosyltransferase catalytic subunit 1.